Reading from the N-terminus, the 289-residue chain is Pteridine reductase 1 (289 aa).

Position 14–41 (14–41 (GAAKRLGSSIAEALHAEGYTVCLHYHRS)) interacts with NADP(+). Position 176 (Ser-176) interacts with substrate. Tyr-195 serves as the catalytic Proton acceptor. 195 to 199 (YTMAK) is an NADP(+) binding site.

The protein belongs to the short-chain dehydrogenases/reductases (SDR) family. As to quaternary structure, homotetramer.

It carries out the reaction (6R)-L-erythro-5,6,7,8-tetrahydrobiopterin + 2 NADP(+) = L-erythro-biopterin + 2 NADPH + 2 H(+). It functions in the pathway cofactor biosynthesis; tetrahydrobiopterin biosynthesis; tetrahydrobiopterin from biopterin: step 1/1. Exhibits a NADPH-dependent biopterin reductase activity. Has good activity with folate and significant activity with dihydrofolate and dihydrobiopterin, but not with quinonoid dihydrobiopterin. Confers resistance to methotrexate (MTX). The chain is Pteridine reductase 1 (PTR1) from Leishmania tarentolae (Sauroleishmania tarentolae).